We begin with the raw amino-acid sequence, 345 residues long: tRNA-dihydrouridine(20/20a) synthase (345 aa).

FMN is bound by residues 26 to 28 (PML) and Gln-78. Cys-108 acts as the Proton donor in catalysis. Residues Lys-147, His-180, 220–222 (NGG), and 242–243 (GR) each bind FMN.

Belongs to the Dus family. DusA subfamily. FMN is required as a cofactor.

It catalyses the reaction 5,6-dihydrouridine(20) in tRNA + NADP(+) = uridine(20) in tRNA + NADPH + H(+). The catalysed reaction is 5,6-dihydrouridine(20) in tRNA + NAD(+) = uridine(20) in tRNA + NADH + H(+). It carries out the reaction 5,6-dihydrouridine(20a) in tRNA + NADP(+) = uridine(20a) in tRNA + NADPH + H(+). The enzyme catalyses 5,6-dihydrouridine(20a) in tRNA + NAD(+) = uridine(20a) in tRNA + NADH + H(+). Catalyzes the synthesis of 5,6-dihydrouridine (D), a modified base found in the D-loop of most tRNAs, via the reduction of the C5-C6 double bond in target uridines. Specifically modifies U20 and U20a in tRNAs. This is tRNA-dihydrouridine(20/20a) synthase from Yersinia pestis.